The primary structure comprises 462 residues: Tubulin alpha-4 chain (462 aa).

GTP-binding residues include glutamine 11, glutamate 82, serine 151, glycine 155, threonine 156, threonine 190, asparagine 217, and asparagine 239. Glutamate 82 contacts Mg(2+). Glutamate 265 is a catalytic residue.

It belongs to the tubulin family. As to quaternary structure, dimer of alpha and beta chains. A typical microtubule is a hollow water-filled tube with an outer diameter of 25 nm and an inner diameter of 15 nM. Alpha-beta heterodimers associate head-to-tail to form protofilaments running lengthwise along the microtubule wall with the beta-tubulin subunit facing the microtubule plus end conferring a structural polarity. Microtubules usually have 13 protofilaments but different protofilament numbers can be found in some organisms and specialized cells. Mg(2+) serves as cofactor.

It localises to the cytoplasm. Its subcellular location is the cytoskeleton. It carries out the reaction GTP + H2O = GDP + phosphate + H(+). Tubulin is the major constituent of microtubules, a cylinder consisting of laterally associated linear protofilaments composed of alpha- and beta-tubulin heterodimers. Microtubules grow by the addition of GTP-tubulin dimers to the microtubule end, where a stabilizing cap forms. Below the cap, tubulin dimers are in GDP-bound state, owing to GTPase activity of alpha-tubulin. This Drosophila melanogaster (Fruit fly) protein is Tubulin alpha-4 chain (alphaTub67C).